Consider the following 132-residue polypeptide: N,N-dimethylformamidase alpha subunit (132 aa).

Heterotetramer of two DmfA1 (alpha) and two DmfA2 (beta) subunits.

The catalysed reaction is N,N-dimethylformamide + H2O = dimethylamine + formate. Activity is slightly inhibited by Mg(2+) and Mn(2+), and slightly increased by Cu(2+). Activity is slightly inhibited by the chelating agents 8-hydroxyquinoline, ethylenediaminetetraacetate, o-phenanthroline and 2,2'-bipyridyl. Functionally, hydrolyzes N,N-dimethylformamide, and to a lesser extent N,N-dimethylacetamide and N,N-diethylacetamide. Has no activity against the substituted amides N-methylformamide, N-ethylformamide, N-ethylformamide and N-methylacetamide or the unsubstituted amides formamide, nicotinamide, acetoamide, benzamide, acetamide and acrylamide. The protein is N,N-dimethylformamidase alpha subunit of Alcaligenes sp.